We begin with the raw amino-acid sequence, 266 residues long: Leucine-rich repeat-containing protein 3 (266 aa).

The N-terminal stretch at 1–38 (MTFPAGAYVLRKVFIPHGCPLIFRLLLAVICLSVPSFA) is a signal peptide. The 32-residue stretch at 39-70 (CPKSCHCSERNSLTVVQCSSRNLEEIPPDLPH) folds into the LRRNT domain. LRR repeat units lie at residues 71–92 (DTVS…AFKN), 95–116 (WLQE…AFKG), and 120–141 (SLRT…AFAR). Positions 151 to 204 (NPWHCECTLQEVLRELRLDPETVNEVSCHTSDQEKYAGKPVIQVLDSGINFCNF) constitute an LRRCT domain. A helical membrane pass occupies residues 211–231 (VAMFVTMFGWFTMVIAYVIYY).

It belongs to the LRRC3 family.

The protein resides in the membrane. In Danio rerio (Zebrafish), this protein is Leucine-rich repeat-containing protein 3 (lrrc3).